The sequence spans 403 residues: Anti-sigma-I factor RsgI8 (403 aa).

At 1-59 (MTKQKGTILKLKNNLAIIMTSDCKIVSIKRQPGMYEGLEISFNKNEIINKKNKLAFYSR) the chain is on the cytoplasmic side. The RsgI N-terminal anti-sigma domain occupies 4 to 51 (QKGTILKLKNNLAIIMTSDCKIVSIKRQPGMYEGLEISFNKNEIINKK). The helical transmembrane segment at 60-80 (IAAGIAAIFIIMVISFNLFNN) threads the bilayer. The Extracellular segment spans residues 81 to 403 (NDVYAYVAID…KAKNSIEKMP (323 aa)). 3 stretches are compositionally biased toward basic and acidic residues: residues 254-314 (VHNV…EPAK), 324-335 (LPKDKTIPEEKT), and 349-403 (VEPK…EKMP). Residues 254–403 (VHNVKKEEPK…KAKNSIEKMP (150 aa)) form a disordered region.

As to quaternary structure, interacts (via RsgI N-terminal anti-sigma domain) with SigI8.

The protein resides in the cell membrane. Anti-sigma factor for SigI8. Negatively regulates SigI8 activity through direct interaction. The sequence is that of Anti-sigma-I factor RsgI8 from Acetivibrio thermocellus (strain ATCC 27405 / DSM 1237 / JCM 9322 / NBRC 103400 / NCIMB 10682 / NRRL B-4536 / VPI 7372) (Clostridium thermocellum).